The following is a 32-amino-acid chain: GGSIPCIETCVWTGCFLVPGCSCKSDKKCYLN.

A cross-link (cyclopeptide (Gly-Asn)) is located at residues 1 to 32 (GGSIPCIETCVWTGCFLVPGCSCKSDKKCYLN). Intrachain disulfides connect C6-C21, C10-C23, and C15-C29.

Post-translationally, this is a cyclic peptide.

Its function is as follows. Probably participates in a plant defense mechanism. This is Cyclotide glopa A from Gloeospermum pauciflorum.